Reading from the N-terminus, the 634-residue chain is Transcription termination factor FttA (634 aa).

A KHa region spans residues 4–69 (EEVLENIRKE…ISIRPDPSVL (66 aa)). The interval 70–137 (VEPEIAKQKI…WAPKPVRTPP (68 aa)) is KHb. The interval 179–381 (WIRVSFLGGA…LIIESTYGAY (203 aa)) is metallo-beta-lactamase N-terminus. 6 residues coordinate Zn(2+): His240, His242, Asp244, His245, His327, and Asp350. The beta-Casp stretch occupies residues 382–575 (DDVLPEREEA…LQVYTIEGFS (194 aa)). The interval 576–634 (GHSDRKQLIKYIRRLKPSPEKIIMVHGEESKCLDFADTVRRLFKKQTYVPMNLDAIRVK) is metallo-beta-lactamase C-terminus. His601 is a Zn(2+) binding site.

The protein belongs to the metallo-beta-lactamase superfamily. RNA-metabolizing metallo-beta-lactamase-like family. FttA subfamily. As to quaternary structure, homodimer. Interacts with RNA polymerase (RNAP), interacts with the Spt4-Spt5 complex. It depends on Zn(2+) as a cofactor.

Its activity is regulated as follows. Optimal NaCl concentration is 100 mM for nuclease activity on RNA. Its function is as follows. Terminates transcription on the whole genome. Termination is linked to FttA-mediated RNA cleavage and does not require NTP hydrolysis. Cleaves endonucleolytically at the RNA exit channel of RNA polymerase (RNAP); the 5'-3' exonuclease activity of this protein degrades the nascent RNA released from RNAP. In terms of biological role, an endoribonuclease with no apparent exonuclease activity, has low activity on single-stranded DNA (endodeoxyribonuclease, endoDNase). The protein is Transcription termination factor FttA of Methanocaldococcus jannaschii (strain ATCC 43067 / DSM 2661 / JAL-1 / JCM 10045 / NBRC 100440) (Methanococcus jannaschii).